A 342-amino-acid polypeptide reads, in one-letter code: Ribosomal RNA small subunit methyltransferase C (342 aa).

The protein belongs to the methyltransferase superfamily. RsmC family. In terms of assembly, monomer.

It is found in the cytoplasm. The catalysed reaction is guanosine(1207) in 16S rRNA + S-adenosyl-L-methionine = N(2)-methylguanosine(1207) in 16S rRNA + S-adenosyl-L-homocysteine + H(+). Specifically methylates the guanine in position 1207 of 16S rRNA in the 30S particle. In Citrobacter koseri (strain ATCC BAA-895 / CDC 4225-83 / SGSC4696), this protein is Ribosomal RNA small subunit methyltransferase C.